A 316-amino-acid polypeptide reads, in one-letter code: Serpentine receptor class gamma-4 (316 aa).

A run of 7 helical transmembrane segments spans residues 21 to 41, 50 to 70, 99 to 121, 140 to 160, 188 to 208, 229 to 249, and 258 to 278; these read FVYL…IWGT, SFFT…FLDV, IVYP…LSIN, MKKV…NVII, FQII…SITL, TAWI…FAFF, and IFYI…PIVM.

It belongs to the nematode receptor-like protein srg family.

Its subcellular location is the membrane. This chain is Serpentine receptor class gamma-4 (srg-4), found in Caenorhabditis elegans.